The following is a 131-amino-acid chain: Small ribosomal subunit protein uS8 (131 aa).

The protein belongs to the universal ribosomal protein uS8 family. In terms of assembly, part of the 30S ribosomal subunit. Contacts proteins S5 and S12.

One of the primary rRNA binding proteins, it binds directly to 16S rRNA central domain where it helps coordinate assembly of the platform of the 30S subunit. In Thiobacillus denitrificans (strain ATCC 25259 / T1), this protein is Small ribosomal subunit protein uS8.